A 283-amino-acid chain; its full sequence is Polyamine aminopropyltransferase (283 aa).

One can recognise a PABS domain in the interval 5 to 238 (PTWIDEYHKG…GIWSWTFASD (234 aa)). Position 32 (glutamine 32) interacts with S-methyl-5'-thioadenosine. The spermidine site is built by histidine 63 and aspartate 87. S-methyl-5'-thioadenosine-binding positions include glutamate 107 and 139–140 (DG). Aspartate 158 functions as the Proton acceptor in the catalytic mechanism. Residue 158–161 (DCSD) coordinates spermidine.

This sequence belongs to the spermidine/spermine synthase family. Homodimer or homotetramer.

It is found in the cytoplasm. The enzyme catalyses S-adenosyl 3-(methylsulfanyl)propylamine + putrescine = S-methyl-5'-thioadenosine + spermidine + H(+). It functions in the pathway amine and polyamine biosynthesis; spermidine biosynthesis; spermidine from putrescine: step 1/1. Catalyzes the irreversible transfer of a propylamine group from the amino donor S-adenosylmethioninamine (decarboxy-AdoMet) to putrescine (1,4-diaminobutane) to yield spermidine. In Prochlorococcus marinus subsp. pastoris (strain CCMP1986 / NIES-2087 / MED4), this protein is Polyamine aminopropyltransferase.